A 66-amino-acid chain; its full sequence is UPF0337 protein SAG0606 (66 aa).

A compositionally biased stretch (basic and acidic residues) spans 1-10; the sequence is MSQEKLKSKV. The tract at residues 1–23 is disordered; the sequence is MSQEKLKSKVEQASGSLKEGAGK.

The protein belongs to the UPF0337 (CsbD) family.

This is UPF0337 protein SAG0606 from Streptococcus agalactiae serotype V (strain ATCC BAA-611 / 2603 V/R).